The following is a 101-amino-acid chain: NADH-quinone oxidoreductase subunit K (101 aa).

The next 3 membrane-spanning stretches (helical) occupy residues 2–22 (TLSAYLALALILFCIGLYGAL), 28–48 (VIVLICIELMLNAVNINFVAF), and 62–82 (FALFAIAVAAAEAAVGLAALI).

It belongs to the complex I subunit 4L family. In terms of assembly, NDH-1 is composed of 14 different subunits. Subunits NuoA, H, J, K, L, M, N constitute the membrane sector of the complex.

The protein resides in the cell membrane. It catalyses the reaction a quinone + NADH + 5 H(+)(in) = a quinol + NAD(+) + 4 H(+)(out). Functionally, NDH-1 shuttles electrons from NADH, via FMN and iron-sulfur (Fe-S) centers, to quinones in the respiratory chain. The immediate electron acceptor for the enzyme in this species is believed to be a menaquinone. Couples the redox reaction to proton translocation (for every two electrons transferred, four hydrogen ions are translocated across the cytoplasmic membrane), and thus conserves the redox energy in a proton gradient. The chain is NADH-quinone oxidoreductase subunit K from Geobacillus kaustophilus (strain HTA426).